A 101-amino-acid polypeptide reads, in one-letter code: Large ribosomal subunit protein uL24 (101 aa).

Belongs to the universal ribosomal protein uL24 family. As to quaternary structure, part of the 50S ribosomal subunit.

In terms of biological role, one of two assembly initiator proteins, it binds directly to the 5'-end of the 23S rRNA, where it nucleates assembly of the 50S subunit. One of the proteins that surrounds the polypeptide exit tunnel on the outside of the subunit. This chain is Large ribosomal subunit protein uL24, found in Elusimicrobium minutum (strain Pei191).